Here is a 366-residue protein sequence, read N- to C-terminus: Probable dual-specificity RNA methyltransferase RlmN (366 aa).

Glutamate 107 (proton acceptor) is an active-site residue. The Radical SAM core domain maps to 113-342 (AEERMTACLS…MAQKFHVTVR (230 aa)). An intrachain disulfide couples cysteine 120 to cysteine 353. Residues cysteine 127, cysteine 131, and cysteine 134 each contribute to the [4Fe-4S] cluster site. S-adenosyl-L-methionine is bound by residues 177-178 (GE), serine 210, 233-235 (SLH), and asparagine 310. Residue cysteine 353 is the S-methylcysteine intermediate of the active site.

The protein belongs to the radical SAM superfamily. RlmN family. Requires [4Fe-4S] cluster as cofactor.

The protein resides in the cytoplasm. The enzyme catalyses adenosine(2503) in 23S rRNA + 2 reduced [2Fe-2S]-[ferredoxin] + 2 S-adenosyl-L-methionine = 2-methyladenosine(2503) in 23S rRNA + 5'-deoxyadenosine + L-methionine + 2 oxidized [2Fe-2S]-[ferredoxin] + S-adenosyl-L-homocysteine. It catalyses the reaction adenosine(37) in tRNA + 2 reduced [2Fe-2S]-[ferredoxin] + 2 S-adenosyl-L-methionine = 2-methyladenosine(37) in tRNA + 5'-deoxyadenosine + L-methionine + 2 oxidized [2Fe-2S]-[ferredoxin] + S-adenosyl-L-homocysteine. Specifically methylates position 2 of adenine 2503 in 23S rRNA and position 2 of adenine 37 in tRNAs. The protein is Probable dual-specificity RNA methyltransferase RlmN of Chlorobium chlorochromatii (strain CaD3).